A 522-amino-acid chain; its full sequence is Protein nucleotidyltransferase YdiU (522 aa).

ATP-binding residues include glycine 109, glycine 111, arginine 112, lysine 132, aspartate 144, glycine 145, arginine 195, and arginine 202. Aspartate 271 acts as the Proton acceptor in catalysis. Asparagine 272 and aspartate 281 together coordinate Mg(2+). Position 281 (aspartate 281) interacts with ATP.

Belongs to the SELO family. It depends on Mg(2+) as a cofactor. Mn(2+) serves as cofactor.

It carries out the reaction L-seryl-[protein] + ATP = 3-O-(5'-adenylyl)-L-seryl-[protein] + diphosphate. The catalysed reaction is L-threonyl-[protein] + ATP = 3-O-(5'-adenylyl)-L-threonyl-[protein] + diphosphate. The enzyme catalyses L-tyrosyl-[protein] + ATP = O-(5'-adenylyl)-L-tyrosyl-[protein] + diphosphate. It catalyses the reaction L-histidyl-[protein] + UTP = N(tele)-(5'-uridylyl)-L-histidyl-[protein] + diphosphate. It carries out the reaction L-seryl-[protein] + UTP = O-(5'-uridylyl)-L-seryl-[protein] + diphosphate. The catalysed reaction is L-tyrosyl-[protein] + UTP = O-(5'-uridylyl)-L-tyrosyl-[protein] + diphosphate. Nucleotidyltransferase involved in the post-translational modification of proteins. It can catalyze the addition of adenosine monophosphate (AMP) or uridine monophosphate (UMP) to a protein, resulting in modifications known as AMPylation and UMPylation. The polypeptide is Protein nucleotidyltransferase YdiU (Burkholderia orbicola (strain MC0-3)).